We begin with the raw amino-acid sequence, 264 residues long: Tryptophan synthase alpha chain (264 aa).

Active-site proton acceptor residues include E49 and D60.

This sequence belongs to the TrpA family. As to quaternary structure, tetramer of two alpha and two beta chains.

It carries out the reaction (1S,2R)-1-C-(indol-3-yl)glycerol 3-phosphate + L-serine = D-glyceraldehyde 3-phosphate + L-tryptophan + H2O. Its pathway is amino-acid biosynthesis; L-tryptophan biosynthesis; L-tryptophan from chorismate: step 5/5. Functionally, the alpha subunit is responsible for the aldol cleavage of indoleglycerol phosphate to indole and glyceraldehyde 3-phosphate. The protein is Tryptophan synthase alpha chain of Geobacter sulfurreducens (strain ATCC 51573 / DSM 12127 / PCA).